A 502-amino-acid polypeptide reads, in one-letter code: UDP-N-acetylmuramate--L-alanine ligase (502 aa).

119 to 125 serves as a coordination point for ATP; that stretch reads GSHGKST.

The protein belongs to the MurCDEF family.

It is found in the cytoplasm. It catalyses the reaction UDP-N-acetyl-alpha-D-muramate + L-alanine + ATP = UDP-N-acetyl-alpha-D-muramoyl-L-alanine + ADP + phosphate + H(+). It functions in the pathway cell wall biogenesis; peptidoglycan biosynthesis. In terms of biological role, cell wall formation. The chain is UDP-N-acetylmuramate--L-alanine ligase from Frankia casuarinae (strain DSM 45818 / CECT 9043 / HFP020203 / CcI3).